Reading from the N-terminus, the 135-residue chain is ATP synthase epsilon chain (135 aa).

The protein belongs to the ATPase epsilon chain family. As to quaternary structure, F-type ATPases have 2 components, CF(1) - the catalytic core - and CF(0) - the membrane proton channel. CF(1) has five subunits: alpha(3), beta(3), gamma(1), delta(1), epsilon(1). CF(0) has three main subunits: a, b and c.

It is found in the cell inner membrane. In terms of biological role, produces ATP from ADP in the presence of a proton gradient across the membrane. This is ATP synthase epsilon chain from Rhodopseudomonas palustris (strain HaA2).